We begin with the raw amino-acid sequence, 99 residues long: Large ribosomal subunit protein uL23 (99 aa).

Belongs to the universal ribosomal protein uL23 family. Part of the 50S ribosomal subunit. Contacts protein L29, and trigger factor when it is bound to the ribosome.

One of the early assembly proteins it binds 23S rRNA. One of the proteins that surrounds the polypeptide exit tunnel on the outside of the ribosome. Forms the main docking site for trigger factor binding to the ribosome. This Clavibacter michiganensis subsp. michiganensis (strain NCPPB 382) protein is Large ribosomal subunit protein uL23.